The following is a 593-amino-acid chain: DNA topoisomerase I, mitochondrial (593 aa).

A mitochondrion-targeting transit peptide spans 1-43; the sequence is MLLLWLRALCRRFQHVPRRVPSRQVSRGSKASRAGWGETSKSS. Interaction with DNA stretches follow at residues 254 to 255, 317 to 322, and 414 to 416; these read KY, RTGNEK, and TAK. The region spanning 261–593 is the Topo IB-type catalytic domain; the sequence is SSKPKGEMDW…FNQAGEDFEF (333 aa). Y551 functions as the O-(3'-phospho-DNA)-tyrosine intermediate in the catalytic mechanism.

The protein belongs to the type IB topoisomerase family. It depends on Ca(2+) as a cofactor. Mg(2+) is required as a cofactor.

The protein localises to the mitochondrion. The enzyme catalyses ATP-independent breakage of single-stranded DNA, followed by passage and rejoining.. Releases the supercoiling and torsional tension of DNA introduced during duplication of mitochondrial DNA by transiently cleaving and rejoining one strand of the DNA duplex. Introduces a single-strand break via transesterification at a target site in duplex DNA. The scissile phosphodiester is attacked by the catalytic tyrosine of the enzyme, resulting in the formation of a DNA-(3'-phosphotyrosyl)-enzyme intermediate and the expulsion of a 5'-OH DNA strand. The free DNA strand then rotates around the intact phosphodiester bond on the opposing strand, thus removing DNA supercoils. Finally, in the religation step, the DNA 5'-OH attacks the covalent intermediate to expel the active-site tyrosine and restore the DNA phosphodiester backbone. The polypeptide is DNA topoisomerase I, mitochondrial (Top1mt) (Rattus norvegicus (Rat)).